The sequence spans 508 residues: Protein adenylyltransferase Fic (508 aa).

Residues 48-70 traverse the membrane as a helical segment; that stretch reads FYRFALFFIAGSFAAFSFHALTS. TPR repeat units follow at residues 132 to 165 and 166 to 200; these read ALGALRLAQDMHLSGKDDKASRLFEHALALAPKH and PEVLLRYGEFLEHNQRNIVLADQYYFQALTLCPSN. Residues 257–262 carry the Inhibitory (S/T)XXXE(G/N) motif motif; sequence SVGIEG. Residues glutamate 261 and 342–345 each bind ATP; that span reads VGGH. One can recognise a Fido domain in the interval 311 to 446; the sequence is ITIKDILELH…IRPFVRFIAD (136 aa). Histidine 389 is a catalytic residue. Residues 393–400, 425–426, and asparagine 433 contribute to the ATP site; these read DGNGRTSR and YY.

It belongs to the fic family. In terms of assembly, homodimer.

The protein resides in the membrane. It carries out the reaction L-tyrosyl-[protein] + ATP = O-(5'-adenylyl)-L-tyrosyl-[protein] + diphosphate. The enzyme catalyses L-threonyl-[protein] + ATP = 3-O-(5'-adenylyl)-L-threonyl-[protein] + diphosphate. The catalysed reaction is 3-O-(5'-adenylyl)-L-threonyl-[protein] + H2O = L-threonyl-[protein] + AMP + H(+). The side chain of Glu-261 determines which of the two opposing activities (AMPylase or de-AMPylase) will take place. In response to endoplasmic reticulum stress, mediates de-AMPylase activity. Adenylyltransferase activity is inhibited by the inhibitory helix present at the N-terminus: Glu-261 binds ATP and competes with ATP-binding at Arg-400, thereby preventing adenylyltransferase activity. In unstressed cells, disengagement of Glu-261 promotes adenylyltransferase activity. Activation dissociates ATP-binding from Glu-261, allowing ordered binding of the entire ATP moiety with the alpha-phosphate in an orientation that is productive for accepting an incoming target hydroxyl side chain. Protein that can both mediate the addition of adenosine 5'-monophosphate (AMP) to specific residues of target proteins (AMPylation), and the removal of the same modification from target proteins (de-AMPylation), depending on the context. The side chain of Glu-261 determines which of the two opposing activities (AMPylase or de-AMPylase) will take place. Acts as a key regulator of the unfolded protein response (UPR) by mediating AMPylation or de-AMPylation of Hsc70-3/BiP. In unstressed cells, acts as an adenylyltransferase by mediating AMPylation of Hsc70-3/BiP at 'Thr-518', thereby inactivating it. In response to endoplasmic reticulum stress, acts as a phosphodiesterase by mediating removal of ATP (de-AMPylation) from Hsc70-3/BiP at 'Thr-518', leading to restore HSPA5/BiP activity. The protein is Protein adenylyltransferase Fic of Drosophila persimilis (Fruit fly).